We begin with the raw amino-acid sequence, 156 residues long: D-aminoacyl-tRNA deacylase (156 aa).

The Gly-cisPro motif, important for rejection of L-amino acids signature appears at 137–138 (GP).

This sequence belongs to the DTD family. In terms of assembly, homodimer.

The protein localises to the cytoplasm. It carries out the reaction glycyl-tRNA(Ala) + H2O = tRNA(Ala) + glycine + H(+). It catalyses the reaction a D-aminoacyl-tRNA + H2O = a tRNA + a D-alpha-amino acid + H(+). Functionally, an aminoacyl-tRNA editing enzyme that deacylates mischarged D-aminoacyl-tRNAs. Also deacylates mischarged glycyl-tRNA(Ala), protecting cells against glycine mischarging by AlaRS. Acts via tRNA-based rather than protein-based catalysis; rejects L-amino acids rather than detecting D-amino acids in the active site. By recycling D-aminoacyl-tRNA to D-amino acids and free tRNA molecules, this enzyme counteracts the toxicity associated with the formation of D-aminoacyl-tRNA entities in vivo and helps enforce protein L-homochirality. The polypeptide is D-aminoacyl-tRNA deacylase (Dictyoglomus turgidum (strain DSM 6724 / Z-1310)).